The chain runs to 493 residues: Alpha-amylase-related protein (493 aa).

The first 19 residues, 1–19, serve as a signal peptide directing secretion; the sequence is MFKFALTLTLCLAGSLSLA. Glutamine 20 is subject to Pyrrolidone carboxylic acid. An intrachain disulfide couples cysteine 47 to cysteine 103. Ca(2+) contacts are provided by asparagine 117, glutamine 168, and aspartate 177. A disulfide bridge connects residues cysteine 156 and cysteine 170. Arginine 205 lines the chloride pocket. Aspartate 207 acts as the Nucleophile in catalysis. Residue histidine 211 participates in Ca(2+) binding. Residue glutamate 244 is the Proton donor of the active site. Chloride contacts are provided by asparagine 307 and arginine 342. 3 disulfides stabilise this stretch: cysteine 375–cysteine 381, cysteine 417–cysteine 440, and cysteine 447–cysteine 459.

Belongs to the glycosyl hydrolase 13 family. As to quaternary structure, monomer. Ca(2+) serves as cofactor. Chloride is required as a cofactor. Midgut and fat body.

It localises to the secreted. The catalysed reaction is Endohydrolysis of (1-&gt;4)-alpha-D-glucosidic linkages in polysaccharides containing three or more (1-&gt;4)-alpha-linked D-glucose units.. In Drosophila melanogaster (Fruit fly), this protein is Alpha-amylase-related protein (Amyrel).